The following is a 226-amino-acid chain: Uracil-DNA glycosylase (226 aa).

The Proton acceptor role is filled by aspartate 64.

This sequence belongs to the uracil-DNA glycosylase (UDG) superfamily. UNG family.

It localises to the cytoplasm. It catalyses the reaction Hydrolyzes single-stranded DNA or mismatched double-stranded DNA and polynucleotides, releasing free uracil.. Functionally, excises uracil residues from the DNA which can arise as a result of misincorporation of dUMP residues by DNA polymerase or due to deamination of cytosine. The protein is Uracil-DNA glycosylase of Vibrio vulnificus (strain CMCP6).